Here is a 125-residue protein sequence, read N- to C-terminus: Putative superoxide reductase (125 aa).

The Fe cation site is built by glutamate 12, histidine 14, histidine 40, histidine 46, cysteine 110, and histidine 113.

Belongs to the desulfoferrodoxin family. Fe cation serves as cofactor.

It carries out the reaction reduced [rubredoxin] + superoxide + 2 H(+) = oxidized [rubredoxin] + H2O2. Uses electrons from reduced NADP, by way of rubredoxin and an oxidoreductase, to catalyze the reduction of superoxide to hydrogen peroxide. The polypeptide is Putative superoxide reductase (Archaeoglobus fulgidus (strain ATCC 49558 / DSM 4304 / JCM 9628 / NBRC 100126 / VC-16)).